Here is a 136-residue protein sequence, read N- to C-terminus: Translation initiation factor 5A (136 aa).

Lys-38 carries the post-translational modification Hypusine.

The protein belongs to the eIF-5A family.

It is found in the cytoplasm. In terms of biological role, functions by promoting the formation of the first peptide bond. The sequence is that of Translation initiation factor 5A from Methanopyrus kandleri (strain AV19 / DSM 6324 / JCM 9639 / NBRC 100938).